The primary structure comprises 130 residues: Capsid protein (130 aa).

The segment at 32–105 is viral RNA-binding; sequence EWISSNSRSQ…FATNDDCALI (74 aa).

This sequence belongs to the Leviviricetes capsid protein family. In terms of assembly, homodimer. The capsid proteins form dimers that assemble by group of 5. Twelve such pentamers are linked together with free dimers. The homodimers binds to the viral RNA via an operator hairpin, but also to many other RNA sequences in the viral genome; this interaction probably shifts the virus from the replicative to the assembly phase and ensures specific encapsidation of the viral genome.

It is found in the virion. In terms of biological role, capsid protein self-assembles to form an icosahedral capsid with a T=3 symmetry, about 26 nm in diameter, and consisting of 89 capsid proteins dimers (178 capsid proteins). Involved in viral genome encapsidation through the interaction between a capsid protein dimer and the multiple packaging signals present in the RNA genome. The capsid also contains 1 copy of the A2 maturation protein. Acts as a translational repressor of viral replicase synthesis late in infection. This latter function is the result of capsid protein interaction with an RNA hairpin which contains the replicase ribosome-binding site. This chain is Capsid protein, found in Enterobacteria phage fr (Bacteriophage fr).